The following is a 163-amino-acid chain: UPF0134 protein MPN_139 (163 aa).

This sequence belongs to the UPF0134 family.

This Mycoplasma pneumoniae (strain ATCC 29342 / M129 / Subtype 1) (Mycoplasmoides pneumoniae) protein is UPF0134 protein MPN_139.